An 80-amino-acid chain; its full sequence is Cytochrome c oxidase subunit 7A1, mitochondrial (80 aa).

A mitochondrion-targeting transit peptide spans 1–21 (MLAPRVSQALIRSFSSTARNR). At 22–46 (LKNRVPEKQKLFQEDNGIPVYLKGG) the chain is on the mitochondrial matrix side. A helical membrane pass occupies residues 47-75 (VVDHILYRVTMGLCLGGTAYGVYCLAWAS). The Mitochondrial intermembrane portion of the chain corresponds to 76-80 (FPRNK).

The protein belongs to the cytochrome c oxidase VIIa family. Component of the complex IV (CIV, cytochrome c oxidase), a multisubunit enzyme composed of 14 subunits. The complex is composed of a catalytic core of 3 subunits MT-CO1, MT-CO2 and MT-CO3, encoded in the mitochondrial DNA, and 11 supernumerary subunits COX4I1 (or COX4I2), COX5A, COX5B, COX6A2 (or COX6A1), COX6B1 (or COX6B2), COX6C, COX7A1 (or COX7A2), COX7B, COX7C, COX8B and NDUFA4, which are encoded in the nuclear genome. The complex exists as a monomer or a dimer and forms supercomplexes (SCs) in the inner mitochondrial membrane with NADH-ubiquinone oxidoreductase (complex I, CI) and ubiquinol-cytochrome c oxidoreductase (cytochrome b-c1 complex, complex III, CIII), resulting in different assemblies (supercomplex SCI(1)III(2)IV(1) and megacomplex MCI(2)III(2)IV(2)).

It is found in the mitochondrion inner membrane. The protein operates within energy metabolism; oxidative phosphorylation. In terms of biological role, component of the mitochondrial respiratory complex IV (CIV, also named cytochrome c oxidase complex), the last enzyme in the mitochondrial electron transport chain which drives oxidative phosphorylation. The CIV complex is the component of the respiratory chain that catalyzes the reduction of oxygen to water. Acts as an assembly factor that specifically drives the homodimerization of CIV complexes, mediating the formation of mitochondrial respiratory supercomplexes (respirasomes) containing two CIV: supercomplxes with two molecules of CIV show improved activity. Despite being highly expressed in brown adipose tissue, not required for thermogenesis. This chain is Cytochrome c oxidase subunit 7A1, mitochondrial (COX7A1), found in Saimiri sciureus (Common squirrel monkey).